The chain runs to 335 residues: Cobalt-precorrin-5B C(1)-methyltransferase (335 aa).

It belongs to the CbiD family.

The enzyme catalyses Co-precorrin-5B + S-adenosyl-L-methionine = Co-precorrin-6A + S-adenosyl-L-homocysteine. It participates in cofactor biosynthesis; adenosylcobalamin biosynthesis; cob(II)yrinate a,c-diamide from sirohydrochlorin (anaerobic route): step 6/10. Functionally, catalyzes the methylation of C-1 in cobalt-precorrin-5B to form cobalt-precorrin-6A. In Methanospirillum hungatei JF-1 (strain ATCC 27890 / DSM 864 / NBRC 100397 / JF-1), this protein is Cobalt-precorrin-5B C(1)-methyltransferase.